We begin with the raw amino-acid sequence, 97 residues long: Large ribosomal subunit protein eL21 (97 aa).

Residues 1 to 26 (MQKSEGFRSKTRYKLQKHPRQKGMAP) are disordered. Positions 9–21 (SKTRYKLQKHPRQ) are enriched in basic residues.

The protein belongs to the eukaryotic ribosomal protein eL21 family.

The polypeptide is Large ribosomal subunit protein eL21 (Methanococcus maripaludis (strain C6 / ATCC BAA-1332)).